A 481-amino-acid chain; its full sequence is 2-succinylbenzoate--CoA ligase (481 aa).

It belongs to the ATP-dependent AMP-binding enzyme family. MenE subfamily.

The catalysed reaction is 2-succinylbenzoate + ATP + CoA = 2-succinylbenzoyl-CoA + AMP + diphosphate. It participates in quinol/quinone metabolism; 1,4-dihydroxy-2-naphthoate biosynthesis; 1,4-dihydroxy-2-naphthoate from chorismate: step 5/7. It functions in the pathway quinol/quinone metabolism; menaquinone biosynthesis. In terms of biological role, converts 2-succinylbenzoate (OSB) to 2-succinylbenzoyl-CoA (OSB-CoA). The protein is 2-succinylbenzoate--CoA ligase of Bacillus mycoides (strain KBAB4) (Bacillus weihenstephanensis).